The sequence spans 78 residues: Acyl carrier protein (78 aa).

Residues 2–77 form the Carrier domain; the sequence is STIEERVKKI…AAIDYVNSHQ (76 aa). An O-(pantetheine 4'-phosphoryl)serine modification is found at serine 37.

The protein belongs to the acyl carrier protein (ACP) family. In terms of processing, 4'-phosphopantetheine is transferred from CoA to a specific serine of apo-ACP by AcpS. This modification is essential for activity because fatty acids are bound in thioester linkage to the sulfhydryl of the prosthetic group.

The protein resides in the cytoplasm. The protein operates within lipid metabolism; fatty acid biosynthesis. Carrier of the growing fatty acid chain in fatty acid biosynthesis. The chain is Acyl carrier protein from Pseudomonas putida (strain W619).